Here is an 80-residue protein sequence, read N- to C-terminus: Putative membrane protein insertion efficiency factor (80 aa).

It belongs to the UPF0161 family.

Its subcellular location is the cell inner membrane. Could be involved in insertion of integral membrane proteins into the membrane. The polypeptide is Putative membrane protein insertion efficiency factor (Picosynechococcus sp. (strain ATCC 27264 / PCC 7002 / PR-6) (Agmenellum quadruplicatum)).